Here is a 117-residue protein sequence, read N- to C-terminus: Immunoglobulin kappa variable 1-33 (117 aa).

An N-terminal signal peptide occupies residues 1–22 (MDMRVPAQLLGLLLLWLSGARC). Residues 23–45 (DIQMTQSPSSLSASVGDRVTITC) are framework-1. Positions 24–117 (IQMTQSPSSL…YYCQQYDNLP (94 aa)) constitute an Ig-like domain. Cys45 and Cys110 are joined by a disulfide. The segment at 46-56 (QASQDISNYLN) is complementarity-determining-1. Residues 57–71 (WYQQKPGKAPKLLIY) form a framework-2 region. The tract at residues 72 to 78 (DASNLET) is complementarity-determining-2. The framework-3 stretch occupies residues 79–110 (GVPSRFSGSGSGTDFTFTISSLQPEDIATYYC). The interval 111–117 (QQYDNLP) is complementarity-determining-3.

In terms of assembly, immunoglobulins are composed of two identical heavy chains and two identical light chains; disulfide-linked.

It localises to the secreted. Its subcellular location is the cell membrane. V region of the variable domain of immunoglobulin light chains that participates in the antigen recognition. Immunoglobulins, also known as antibodies, are membrane-bound or secreted glycoproteins produced by B lymphocytes. In the recognition phase of humoral immunity, the membrane-bound immunoglobulins serve as receptors which, upon binding of a specific antigen, trigger the clonal expansion and differentiation of B lymphocytes into immunoglobulins-secreting plasma cells. Secreted immunoglobulins mediate the effector phase of humoral immunity, which results in the elimination of bound antigens. The antigen binding site is formed by the variable domain of one heavy chain, together with that of its associated light chain. Thus, each immunoglobulin has two antigen binding sites with remarkable affinity for a particular antigen. The variable domains are assembled by a process called V-(D)-J rearrangement and can then be subjected to somatic hypermutations which, after exposure to antigen and selection, allow affinity maturation for a particular antigen. The protein is Immunoglobulin kappa variable 1-33 of Homo sapiens (Human).